Consider the following 459-residue polypeptide: MNRLPSSASALACSAHALNLIEKRTLDHEEMKALNQEVREYFKEHVNPGFLEYRKSVTAGGDYGAVEWQAGGLNTLVDTQGQEFIDCLGGFGIFNVGHRNPVVVSAVENQLAKQPLHSQELLDPLRAMLAKTLAALTPGKLKYSFFCNSGTESVEAAIKLAKAYQSPRGKFTFIATSGAFHGKSLGALSATAKSTFRKPFMPLLPGFRHVPFGDINAMRTMLSECKKTGDDVAAVILEPIQGEGGVILPPQGYLPAVRKLCDEFGALLILDEVQTGMGRTGKMFACEHENVQPDILCLAKALGGGVMPIGATVATEEVFSVLFDNPFLHTTTFGGNPLACAAALATINVLLTQNLPAQAAQKGDMLLDGFRLLAQEYPDLVNEVRGKGMLMAIEFVDNEIGYDFASEMFRQRVLVAGTLNNAKTIRVEPPLTLTLEQCEQVLKAARKALAALRVSVEEA.

Pyridoxal 5'-phosphate is bound by residues 150–151 (GT) and Q274. K300 is modified (N6-(pyridoxal phosphate)lysine). T332 serves as a coordination point for pyridoxal 5'-phosphate.

This sequence belongs to the class-III pyridoxal-phosphate-dependent aminotransferase family. Putrescine aminotransferase subfamily. It depends on pyridoxal 5'-phosphate as a cofactor.

The catalysed reaction is an alkane-alpha,omega-diamine + 2-oxoglutarate = an omega-aminoaldehyde + L-glutamate. It carries out the reaction putrescine + 2-oxoglutarate = 1-pyrroline + L-glutamate + H2O. It catalyses the reaction cadaverine + 2-oxoglutarate = 5-aminopentanal + L-glutamate. Its pathway is amine and polyamine degradation; putrescine degradation; 4-aminobutanal from putrescine (transaminase route): step 1/1. Functionally, catalyzes the aminotransferase reaction from putrescine to 2-oxoglutarate, leading to glutamate and 4-aminobutanal, which spontaneously cyclizes to form 1-pyrroline. This is the first step in one of two pathways for putrescine degradation, where putrescine is converted into 4-aminobutanoate (gamma-aminobutyrate or GABA) via 4-aminobutanal. Also functions as a cadaverine transaminase in a a L-lysine degradation pathway to succinate that proceeds via cadaverine, glutarate and L-2-hydroxyglutarate. This is Putrescine aminotransferase from Klebsiella pneumoniae (strain 342).